The chain runs to 310 residues: MKLVFAGTPEVAVPALDALIASGRHEVAAVVTRPDAPAGRGRRLVASPVAQRAEEAGIEVLKPVKPRDEEFLARLREIAPDCCPVVAYGALLPRVALDIPAHGWVNLHFSLLPAWRGAAPVQHSIMAGDEITGASTFLIEEGLDSGPVFGTVTEEIRPTDTSGDLLTRLAFAGSGLLVATMDGVEEGKLKAVPQPADGITLAPKITVENAHVDWSTPALRVDRVVRGCTPAPGAWTVFRGERLKLIQVVPVPERTDLAPGALSVGKNNVYVGTGSYAVELLWVQAQGKKPMRAADWARGVRITDGEPLGA.

(6S)-5,6,7,8-tetrahydrofolate is bound at residue 110 to 113; it reads SLLP.

Belongs to the Fmt family.

The catalysed reaction is L-methionyl-tRNA(fMet) + (6R)-10-formyltetrahydrofolate = N-formyl-L-methionyl-tRNA(fMet) + (6S)-5,6,7,8-tetrahydrofolate + H(+). Functionally, attaches a formyl group to the free amino group of methionyl-tRNA(fMet). The formyl group appears to play a dual role in the initiator identity of N-formylmethionyl-tRNA by promoting its recognition by IF2 and preventing the misappropriation of this tRNA by the elongation apparatus. This Streptomyces avermitilis (strain ATCC 31267 / DSM 46492 / JCM 5070 / NBRC 14893 / NCIMB 12804 / NRRL 8165 / MA-4680) protein is Methionyl-tRNA formyltransferase.